Consider the following 1265-residue polypeptide: Methionine synthase (1265 aa).

Residues 19–338 (RDEINAILQK…DHIREIAEAV (320 aa)) enclose the Hcy-binding domain. Zn(2+)-binding residues include cysteine 260, cysteine 323, and cysteine 324. Residues 371 to 632 (FVNIGERCNV…IHKELLQLCE (262 aa)) form the Pterin-binding domain. (6S)-5,6,7,8-tetrahydrofolate is bound by residues 382 to 384 (GSR), aspartate 449, asparagine 470, aspartate 537, asparagine 579, arginine 585, and arginine 591. The region spanning 662–759 (QTDEWRNGPV…FMEKEREETR (98 aa)) is the B12-binding N-terminal domain. Residues glutamate 709, 782–786 (GDVHD), histidine 785, serine 830, threonine 834, and alanine 886 each bind methylcob(III)alamin. The B12-binding domain occupies 772–907 (QGTIVLATVK…DENLKDEYFE (136 aa)). The 343-residue stretch at 923–1265 (SLKERRYLPL…LGPILGYDTD (343 aa)) folds into the AdoMet activation domain. S-adenosyl-L-methionine contacts are provided by residues aspartate 974, arginine 1172, and 1227–1228 (YF). Threonine 1264 is subject to Phosphothreonine.

It belongs to the vitamin-B12 dependent methionine synthase family. In terms of assembly, monomer. Dimer. Forms a multiprotein complex with MMACHC, MMADHC and MTRR. Methylcob(III)alamin is required as a cofactor. Requires Zn(2+) as cofactor. In terms of tissue distribution, widely expressed. Expressed at the highest levels in pancreas, heart, brain, skeletal muscle and placenta. Expressed at lower levels in lung, liver and kidney.

The protein resides in the cytoplasm. The catalysed reaction is (6S)-5-methyl-5,6,7,8-tetrahydrofolate + L-homocysteine = (6S)-5,6,7,8-tetrahydrofolate + L-methionine. It participates in amino-acid biosynthesis; L-methionine biosynthesis via de novo pathway; L-methionine from L-homocysteine (MetH route): step 1/1. Functionally, catalyzes the transfer of a methyl group from methylcob(III)alamin (MeCbl) to homocysteine, yielding enzyme-bound cob(I)alamin and methionine in the cytosol. MeCbl is an active form of cobalamin (vitamin B12) used as a cofactor for methionine biosynthesis. Cob(I)alamin form is regenerated to MeCbl by a transfer of a methyl group from 5-methyltetrahydrofolate. The processing of cobalamin in the cytosol occurs in a multiprotein complex composed of at least MMACHC, MMADHC, MTRR (methionine synthase reductase) and MTR which may contribute to shuttle safely and efficiently cobalamin towards MTR in order to produce methionine. In Homo sapiens (Human), this protein is Methionine synthase.